A 487-amino-acid polypeptide reads, in one-letter code: Putative B3 domain-containing protein At1g78640 (487 aa).

2 consecutive DNA-binding regions (TF-B3) follow at residues 171 to 269 (RLLL…QQGT) and 379 to 474 (RLTL…LFRV).

It is found in the nucleus. This is Putative B3 domain-containing protein At1g78640 from Arabidopsis thaliana (Mouse-ear cress).